Here is a 297-residue protein sequence, read N- to C-terminus: Quinate/shikimate dehydrogenase (297 aa).

Positions 80 and 116 each coordinate substrate. Residues 141–144 (AGGA), 164–167 (NRRD), K214, 241–244 (CVYN), and G264 contribute to the NAD(+) site.

The protein belongs to the shikimate dehydrogenase family. In terms of assembly, homodimer.

The catalysed reaction is L-quinate + NAD(+) = 3-dehydroquinate + NADH + H(+). It catalyses the reaction L-quinate + NADP(+) = 3-dehydroquinate + NADPH + H(+). It carries out the reaction shikimate + NADP(+) = 3-dehydroshikimate + NADPH + H(+). The enzyme catalyses shikimate + NAD(+) = 3-dehydroshikimate + NADH + H(+). It participates in metabolic intermediate biosynthesis; chorismate biosynthesis; chorismate from D-erythrose 4-phosphate and phosphoenolpyruvate: step 4/7. In terms of biological role, the actual biological function of YdiB remains unclear, nor is it known whether 3-dehydroshikimate or quinate represents the natural substrate. Catalyzes the reversible NAD-dependent reduction of both 3-dehydroshikimate (DHSA) and 3-dehydroquinate to yield shikimate (SA) and quinate, respectively. It can use both NAD or NADP for catalysis, however it has higher catalytic efficiency with NAD. The protein is Quinate/shikimate dehydrogenase of Shigella dysenteriae serotype 1 (strain Sd197).